We begin with the raw amino-acid sequence, 557 residues long: Formate--tetrahydrofolate ligase (557 aa).

65-72 is a binding site for ATP; that stretch reads TPAGEGKT.

This sequence belongs to the formate--tetrahydrofolate ligase family.

It carries out the reaction (6S)-5,6,7,8-tetrahydrofolate + formate + ATP = (6R)-10-formyltetrahydrofolate + ADP + phosphate. It participates in one-carbon metabolism; tetrahydrofolate interconversion. The chain is Formate--tetrahydrofolate ligase from Methylorubrum populi (strain ATCC BAA-705 / NCIMB 13946 / BJ001) (Methylobacterium populi).